The following is a 234-amino-acid chain: Adenosine 5'-phosphosulfate reductase (234 aa).

[4Fe-4S] cluster contacts are provided by Cys-120, Cys-121, Cys-203, and Cys-206. Catalysis depends on Cys-229, which acts as the Nucleophile; cysteine thiosulfonate intermediate.

It belongs to the PAPS reductase family. CysH subfamily. Requires [4Fe-4S] cluster as cofactor.

The protein resides in the cytoplasm. The enzyme catalyses [thioredoxin]-disulfide + sulfite + AMP + 2 H(+) = adenosine 5'-phosphosulfate + [thioredoxin]-dithiol. Its pathway is sulfur metabolism; hydrogen sulfide biosynthesis; sulfite from sulfate. Catalyzes the formation of sulfite from adenosine 5'-phosphosulfate (APS) using thioredoxin as an electron donor. The protein is Adenosine 5'-phosphosulfate reductase of Bacillus cereus (strain Q1).